A 74-amino-acid polypeptide reads, in one-letter code: Brevinin-2Tb (74 aa).

A signal peptide spans 1 to 22; it reads MFTMKKSLLLFFFLGTISLSLC. Residues 23–40 constitute a propeptide that is removed on maturation; it reads QEERNADEDDGEMTEEEK. The cysteines at positions 68 and 74 are disulfide-linked.

Belongs to the frog skin active peptide (FSAP) family. Brevinin subfamily. Expressed by the skin glands.

The protein resides in the secreted. In terms of biological role, antimicrobial peptide. The sequence is that of Brevinin-2Tb from Rana temporaria (European common frog).